A 953-amino-acid chain; its full sequence is GATA zinc finger domain-containing protein 14 (953 aa).

The span at 1 to 21 shows a compositional bias: polar residues; the sequence is MFEKIPNQNSHSMGDNNTGYY. Disordered regions lie at residues 1–109 and 216–756; these read MFEK…SPNR and TYGS…TQPQ. Positions 22 to 89 are enriched in low complexity; the sequence is NNNNNNNNNN…QLPSPQLSQP (68 aa). The segment covering 90 to 109 has biased composition (polar residues); that stretch reads NSMNTTPNQTSPNLRSSPNR. Composition is skewed to low complexity over residues 219–330, 342–683, and 690–756; these read SSNT…VNAN, NIYN…PNSS, and GNNG…TQPQ. The GATA-type zinc finger occupies 893–918; that stretch reads CTSCGTTQTPEWRKGPAGGKSLCNAC. The segment at 934–953 is disordered; it reads KVETTSSPPSTSMNVVNLLN.

This chain is GATA zinc finger domain-containing protein 14 (gtaN), found in Dictyostelium discoideum (Social amoeba).